A 546-amino-acid chain; its full sequence is Probable protein kinase UbiB (546 aa).

The Protein kinase domain occupies 124–502; sequence DFDIKPLASA…RVRQGQSRYL (379 aa). ATP contacts are provided by residues 130–138 and K153; that span reads LASASIAQV. D288 (proton acceptor) is an active-site residue. 2 consecutive transmembrane segments (helical) span residues 501 to 521 and 522 to 542; these read YLFG…INRP and DWQM…LIGW.

Belongs to the ABC1 family. UbiB subfamily.

Its subcellular location is the cell inner membrane. Its pathway is cofactor biosynthesis; ubiquinone biosynthesis [regulation]. Functionally, is probably a protein kinase regulator of UbiI activity which is involved in aerobic coenzyme Q (ubiquinone) biosynthesis. The polypeptide is Probable protein kinase UbiB (Enterobacter sp. (strain 638)).